A 388-amino-acid chain; its full sequence is Phosphoribosylformylglycinamidine cyclo-ligase, chloroplastic/mitochondrial (388 aa).

It belongs to the AIR synthase family.

It localises to the plastid. The protein localises to the chloroplast. It is found in the mitochondrion. The catalysed reaction is 2-formamido-N(1)-(5-O-phospho-beta-D-ribosyl)acetamidine + ATP = 5-amino-1-(5-phospho-beta-D-ribosyl)imidazole + ADP + phosphate + H(+). The protein operates within purine metabolism; IMP biosynthesis via de novo pathway; 5-amino-1-(5-phospho-D-ribosyl)imidazole from N(2)-formyl-N(1)-(5-phospho-D-ribosyl)glycinamide: step 2/2. The polypeptide is Phosphoribosylformylglycinamidine cyclo-ligase, chloroplastic/mitochondrial (PUR5) (Vigna unguiculata (Cowpea)).